Here is a 336-residue protein sequence, read N- to C-terminus: Dihydroorotate dehydrogenase (quinone) (336 aa).

FMN is bound by residues 62 to 66 (AGLDK) and Thr-86. Substrate is bound at residue Lys-66. 111 to 115 (NRMGF) contributes to the substrate binding site. FMN contacts are provided by Asn-139 and Asn-172. Asn-172 contacts substrate. The active-site Nucleophile is the Ser-175. Asn-177 provides a ligand contact to substrate. FMN-binding residues include Lys-217 and Thr-245. 246–247 (NT) contacts substrate. Residues Gly-268, Gly-297, and 318–319 (YS) contribute to the FMN site.

Belongs to the dihydroorotate dehydrogenase family. Type 2 subfamily. In terms of assembly, monomer. The cofactor is FMN.

The protein localises to the cell membrane. It carries out the reaction (S)-dihydroorotate + a quinone = orotate + a quinol. Its pathway is pyrimidine metabolism; UMP biosynthesis via de novo pathway; orotate from (S)-dihydroorotate (quinone route): step 1/1. Catalyzes the conversion of dihydroorotate to orotate with quinone as electron acceptor. This is Dihydroorotate dehydrogenase (quinone) from Edwardsiella ictaluri (strain 93-146).